The sequence spans 307 residues: Dihydroorotate dehydrogenase B (NAD(+)), catalytic subunit (307 aa).

FMN contacts are provided by residues Ser-22 and 46 to 47; that span reads KA. Residues Lys-46 and 70–74 each bind substrate; that span reads NAIGL. 2 residues coordinate FMN: Asn-102 and Asn-130. Asn-130 contacts substrate. The Nucleophile role is filled by Cys-133. The FMN site is built by Lys-168 and Ile-194. 195–196 is a binding site for substrate; the sequence is NT. FMN-binding positions include Gly-220, 246–247, and 268–269; these read GG and GT.

This sequence belongs to the dihydroorotate dehydrogenase family. Type 1 subfamily. As to quaternary structure, heterotetramer of 2 PyrK and 2 PyrD type B subunits. The cofactor is FMN.

The protein resides in the cytoplasm. It catalyses the reaction (S)-dihydroorotate + NAD(+) = orotate + NADH + H(+). The protein operates within pyrimidine metabolism; UMP biosynthesis via de novo pathway; orotate from (S)-dihydroorotate (NAD(+) route): step 1/1. Functionally, catalyzes the conversion of dihydroorotate to orotate with NAD(+) as electron acceptor. In Latilactobacillus sakei subsp. sakei (strain 23K) (Lactobacillus sakei subsp. sakei), this protein is Dihydroorotate dehydrogenase B (NAD(+)), catalytic subunit (pyrD).